The sequence spans 485 residues: Glutamyl-tRNA(Gln) amidotransferase subunit A (485 aa).

Active-site charge relay system residues include K78 and S153. Residue S177 is the Acyl-ester intermediate of the active site.

This sequence belongs to the amidase family. GatA subfamily. As to quaternary structure, heterotrimer of A, B and C subunits.

It carries out the reaction L-glutamyl-tRNA(Gln) + L-glutamine + ATP + H2O = L-glutaminyl-tRNA(Gln) + L-glutamate + ADP + phosphate + H(+). Its function is as follows. Allows the formation of correctly charged Gln-tRNA(Gln) through the transamidation of misacylated Glu-tRNA(Gln) in organisms which lack glutaminyl-tRNA synthetase. The reaction takes place in the presence of glutamine and ATP through an activated gamma-phospho-Glu-tRNA(Gln). The protein is Glutamyl-tRNA(Gln) amidotransferase subunit A of Geobacter sulfurreducens (strain ATCC 51573 / DSM 12127 / PCA).